The primary structure comprises 510 residues: Hyaluronidase PH-20 (510 aa).

The first 35 residues, Met1–Thr35, serve as a signal peptide directing secretion. 2 cysteine pairs are disulfide-bonded: Cys60-Cys351 and Cys224-Cys238. Asn82 carries an N-linked (GlcNAc...) asparagine glycan. Glu148 (proton donor) is an active-site residue. 4 N-linked (GlcNAc...) asparagine glycosylation sites follow: Asn166, Asn235, Asn254, and Asn368. Disulfide bonds link Cys376–Cys387, Cys381–Cys435, and Cys437–Cys464. N-linked (GlcNAc...) asparagine glycans are attached at residues Asn393, Asn440, and Asn484. Ser491 is lipidated: GPI-anchor amidated serine. Positions Thr492–Leu510 are cleaved as a propeptide — removed in mature form.

Belongs to the glycosyl hydrolase 56 family. In terms of tissue distribution, testis.

It is found in the cell membrane. The catalysed reaction is Random hydrolysis of (1-&gt;4)-linkages between N-acetyl-beta-D-glucosamine and D-glucuronate residues in hyaluronate.. Involved in sperm-egg adhesion. Upon fertilization sperm must first penetrate a layer of cumulus cells that surrounds the egg before reaching the zona pellucida. The cumulus cells are embedded in a matrix containing hyaluronic acid which is formed prior to ovulation. This protein aids in penetrating the layer of cumulus cells by digesting hyaluronic acid. The protein is Hyaluronidase PH-20 (SPAM1) of Macaca fascicularis (Crab-eating macaque).